The following is a 186-amino-acid chain: Calcium load-activated calcium channel homolog (186 aa).

Topologically, residues 1–6 (MLGDCL) are cytoplasmic. The chain crosses the membrane as a helical span at residues 7-27 (LIIAIAFGTALAGEGITWLLV). Residues 28 to 87 (YRSDHYKRLKADMDKKTKKLEKKKQEVGDTNDKNIKRKLEREEERLKATNRDMSMFKMKS) lie on the Lumenal side of the membrane. Residues 30–86 (SDHYKRLKADMDKKTKKLEKKKQEVGDTNDKNIKRKLEREEERLKATNRDMSMFKMK) adopt a coiled-coil conformation. A helical transmembrane segment spans residues 88–108 (MFAIGLAFTALLSTFNSIFEG). The Cytoplasmic segment spans residues 109–134 (RVVAKLPFYPIGFIQGLSHRNLIGED). Residues 135–151 (MTDCSFIFLYILCTMTV) constitute an intramembrane region (pore-forming). At 152–186 (RQNLQKILGFAPSRAMARQQSSPWAPPNSQMNYLR) the chain is on the cytoplasmic side.

This sequence belongs to the TMCO1 family. Homodimer and homotetramer.

The protein resides in the endoplasmic reticulum membrane. In terms of biological role, calcium-selective channel required to prevent calcium stores from overfilling. This chain is Calcium load-activated calcium channel homolog, found in Caenorhabditis elegans.